The primary structure comprises 524 residues: Anthranilate synthase component 1 (524 aa).

L-tryptophan-binding positions include Ser-55 and 297 to 299 (PYM). 332–333 (GT) contacts chorismate. Glu-359 serves as a coordination point for Mg(2+). Residues Tyr-447, Arg-467, 485–487 (GAG), and Gly-487 contribute to the chorismate site. A Mg(2+)-binding site is contributed by Glu-500.

This sequence belongs to the anthranilate synthase component I family. In terms of assembly, heterotetramer consisting of two non-identical subunits: a beta subunit (TrpG) and a large alpha subunit (TrpE). Requires Mg(2+) as cofactor.

The catalysed reaction is chorismate + L-glutamine = anthranilate + pyruvate + L-glutamate + H(+). It participates in amino-acid biosynthesis; L-tryptophan biosynthesis; L-tryptophan from chorismate: step 1/5. Its activity is regulated as follows. Feedback inhibited by tryptophan. Part of a heterotetrameric complex that catalyzes the two-step biosynthesis of anthranilate, an intermediate in the biosynthesis of L-tryptophan. In the first step, the glutamine-binding beta subunit (TrpG) of anthranilate synthase (AS) provides the glutamine amidotransferase activity which generates ammonia as a substrate that, along with chorismate, is used in the second step, catalyzed by the large alpha subunit of AS (TrpE) to produce anthranilate. In the absence of TrpG, TrpE can synthesize anthranilate directly from chorismate and high concentrations of ammonia. The polypeptide is Anthranilate synthase component 1 (trpE) (Haloferax volcanii (strain ATCC 29605 / DSM 3757 / JCM 8879 / NBRC 14742 / NCIMB 2012 / VKM B-1768 / DS2) (Halobacterium volcanii)).